The following is a 126-amino-acid chain: uncharacterized protein (126 aa).

Residues 5-25 (LIQHITSIFVFSFFFLFFFFS) traverse the membrane as a helical segment.

Its subcellular location is the membrane. This is an uncharacterized protein from Saccharomyces cerevisiae (strain ATCC 204508 / S288c) (Baker's yeast).